Here is a 116-residue protein sequence, read N- to C-terminus: Iron-sulfur cluster insertion protein ErpA (116 aa).

Residues cysteine 44, cysteine 108, and cysteine 110 each contribute to the iron-sulfur cluster site.

It belongs to the HesB/IscA family. In terms of assembly, homodimer. Iron-sulfur cluster is required as a cofactor.

Required for insertion of 4Fe-4S clusters for at least IspG. The protein is Iron-sulfur cluster insertion protein ErpA of Francisella philomiragia subsp. philomiragia (strain ATCC 25017 / CCUG 19701 / FSC 153 / O#319-036).